We begin with the raw amino-acid sequence, 321 residues long: MFDFRPFYQQIATSTLSAWLETLPLQLKQWEKQTHGDYIKWSKIIDFLPHLTADHIDLKSAVKAETKTPLSSGERQRIIHHLKQLMPWRKGPYHLYGIHIDCEWRSDFKWERVLPHLAPLQNRLVLDVGCGSGYHMWRMVGEGAKMVVGIDPTELFLCQFEAVRKLLNNDRRANLIPLGIEEMQPLAAFDTVFSMGVLYHRKSPLDHLTQLKNQLVKDGELVLETLVVEGDINTTLVPTDRYAKMKNVYFIPSVLALINWLEKCGFHNIRCVDVETTGLEEQRKTDWLENESLIDFLNPQDHSKTIEGYPAPKRAVILANK.

Carboxy-S-adenosyl-L-methionine contacts are provided by residues Lys-90, Trp-104, Lys-109, Gly-129, 151–153 (DPT), 180–181 (IE), Met-195, Tyr-199, and Arg-314.

Belongs to the class I-like SAM-binding methyltransferase superfamily. CmoB family. As to quaternary structure, homotetramer.

The catalysed reaction is carboxy-S-adenosyl-L-methionine + 5-hydroxyuridine(34) in tRNA = 5-carboxymethoxyuridine(34) in tRNA + S-adenosyl-L-homocysteine + H(+). Its function is as follows. Catalyzes carboxymethyl transfer from carboxy-S-adenosyl-L-methionine (Cx-SAM) to 5-hydroxyuridine (ho5U) to form 5-carboxymethoxyuridine (cmo5U) at position 34 in tRNAs. This is tRNA U34 carboxymethyltransferase from Histophilus somni (strain 129Pt) (Haemophilus somnus).